Consider the following 322-residue polypeptide: Acetyl-coenzyme A carboxylase carboxyl transferase subunit alpha (322 aa).

The CoA carboxyltransferase C-terminal domain occupies 39-293 (RLASKSQQLT…KRALAESLRQ (255 aa)).

Belongs to the AccA family. As to quaternary structure, acetyl-CoA carboxylase is a heterohexamer composed of biotin carboxyl carrier protein (AccB), biotin carboxylase (AccC) and two subunits each of ACCase subunit alpha (AccA) and ACCase subunit beta (AccD).

The protein resides in the cytoplasm. It catalyses the reaction N(6)-carboxybiotinyl-L-lysyl-[protein] + acetyl-CoA = N(6)-biotinyl-L-lysyl-[protein] + malonyl-CoA. Its pathway is lipid metabolism; malonyl-CoA biosynthesis; malonyl-CoA from acetyl-CoA: step 1/1. Its function is as follows. Component of the acetyl coenzyme A carboxylase (ACC) complex. First, biotin carboxylase catalyzes the carboxylation of biotin on its carrier protein (BCCP) and then the CO(2) group is transferred by the carboxyltransferase to acetyl-CoA to form malonyl-CoA. The polypeptide is Acetyl-coenzyme A carboxylase carboxyl transferase subunit alpha (Ralstonia pickettii (strain 12J)).